The chain runs to 504 residues: Anaerobic nitric oxide reductase transcription regulator NorR (504 aa).

Asp-57 is modified (4-aspartylphosphate). Positions 187-416 (MIGLSPGMTQ…LEHAIHRAVV (230 aa)) constitute a Sigma-54 factor interaction domain. Residues 215–222 (GETGTGKE) and 278–287 (ADNGTLFLDE) contribute to the ATP site. The H-T-H motif DNA-binding region spans 479–498 (WAACARMLETDVANLHRLAK).

It functions in the pathway nitrogen metabolism; nitric oxide reduction. Functionally, required for the expression of anaerobic nitric oxide (NO) reductase, acts as a transcriptional activator for at least the norVW operon. Activation also requires sigma-54. The polypeptide is Anaerobic nitric oxide reductase transcription regulator NorR (Shigella sonnei (strain Ss046)).